A 610-amino-acid polypeptide reads, in one-letter code: Dihydroxy-acid dehydratase (610 aa).

Asp81 serves as a coordination point for Mg(2+). Cys122 serves as a coordination point for [2Fe-2S] cluster. Mg(2+)-binding residues include Asp123 and Lys124. Lys124 is modified (N6-carboxylysine). Cys193 contacts [2Fe-2S] cluster. Glu489 contacts Mg(2+). Ser515 acts as the Proton acceptor in catalysis.

It belongs to the IlvD/Edd family. In terms of assembly, homodimer. Requires [2Fe-2S] cluster as cofactor. Mg(2+) is required as a cofactor.

The catalysed reaction is (2R)-2,3-dihydroxy-3-methylbutanoate = 3-methyl-2-oxobutanoate + H2O. The enzyme catalyses (2R,3R)-2,3-dihydroxy-3-methylpentanoate = (S)-3-methyl-2-oxopentanoate + H2O. The protein operates within amino-acid biosynthesis; L-isoleucine biosynthesis; L-isoleucine from 2-oxobutanoate: step 3/4. It functions in the pathway amino-acid biosynthesis; L-valine biosynthesis; L-valine from pyruvate: step 3/4. In terms of biological role, functions in the biosynthesis of branched-chain amino acids. Catalyzes the dehydration of (2R,3R)-2,3-dihydroxy-3-methylpentanoate (2,3-dihydroxy-3-methylvalerate) into 2-oxo-3-methylpentanoate (2-oxo-3-methylvalerate) and of (2R)-2,3-dihydroxy-3-methylbutanoate (2,3-dihydroxyisovalerate) into 2-oxo-3-methylbutanoate (2-oxoisovalerate), the penultimate precursor to L-isoleucine and L-valine, respectively. The sequence is that of Dihydroxy-acid dehydratase from Xylella fastidiosa (strain M23).